We begin with the raw amino-acid sequence, 141 residues long: Hemoglobin subunit alpha (141 aa).

Residues 1–141 (VLSPADKTNI…VSTVLTSKYR (141 aa)) enclose the Globin domain. Ser3 is subject to Phosphoserine. The residue at position 7 (Lys7) is an N6-succinyllysine. Thr8 bears the Phosphothreonine mark. Residue Lys11 is modified to N6-succinyllysine. Lys16 carries the post-translational modification N6-acetyllysine; alternate. Lys16 carries the post-translational modification N6-succinyllysine; alternate. Tyr24 is subject to Phosphotyrosine. Ser35 carries the phosphoserine modification. N6-succinyllysine is present on Lys40. Ser49 carries the phosphoserine modification. His58 is a binding site for O2. Heme b is bound at residue His87. At Ser102 the chain carries Phosphoserine. Thr108 is subject to Phosphothreonine. Phosphoserine is present on Ser124. A phosphothreonine mark is found at Thr134 and Thr137. Ser138 carries the phosphoserine modification.

This sequence belongs to the globin family. As to quaternary structure, heterotetramer of two alpha chains and two beta chains. Red blood cells.

Involved in oxygen transport from the lung to the various peripheral tissues. Functionally, hemopressin acts as an antagonist peptide of the cannabinoid receptor CNR1. Hemopressin-binding efficiently blocks cannabinoid receptor CNR1 and subsequent signaling. In Chrysocyon brachyurus (Maned wolf), this protein is Hemoglobin subunit alpha (HBA).